The sequence spans 426 residues: MIDVKDLSENPDKFRASQRARGADESVVDAIISADAARRAALIRFENLRAEQNAFGKKVAQAKGEEKQALLAEVKVLAASVKAASAEADVAQAQQEELLRAIPNLIVDGVPEGGEDDYIVVKTVGEPREFPDFEPKDHLEIGELIGAIDMERGAKVSGSRFYFLRGVGARLEMALLQMAMEQAIDAGFIPMITPTLVRPETMQGTGFDVKHDAEIYRLAEDDLYLVGTSEVALAGYHADEILDLSAGPIRYAGQSSCYRREAGSHGKDTRGIIRVHQFNKVEMFIYTTVEEAAAEHERLLAWEEEMLAKCELPYRVIDTAAGDLGNSAARKFDCEAWVPTQGAYRELTSTSNCTTFQARRLNIRERVLNEDGAPKGTRAVATLNGTLATTRWIVAILEHHQNEDGSVNVPRALQKYLGGLEVLPVL.

228–230 is a binding site for L-serine; sequence TSE. Residues 259 to 261 and valine 275 each bind ATP; that span reads RRE. Glutamate 282 provides a ligand contact to L-serine. 346–349 is a binding site for ATP; that stretch reads ELTS. L-serine is bound at residue threonine 386.

Belongs to the class-II aminoacyl-tRNA synthetase family. Type-1 seryl-tRNA synthetase subfamily. Homodimer. The tRNA molecule binds across the dimer.

It localises to the cytoplasm. It catalyses the reaction tRNA(Ser) + L-serine + ATP = L-seryl-tRNA(Ser) + AMP + diphosphate + H(+). The catalysed reaction is tRNA(Sec) + L-serine + ATP = L-seryl-tRNA(Sec) + AMP + diphosphate + H(+). Its pathway is aminoacyl-tRNA biosynthesis; selenocysteinyl-tRNA(Sec) biosynthesis; L-seryl-tRNA(Sec) from L-serine and tRNA(Sec): step 1/1. Catalyzes the attachment of serine to tRNA(Ser). Is also able to aminoacylate tRNA(Sec) with serine, to form the misacylated tRNA L-seryl-tRNA(Sec), which will be further converted into selenocysteinyl-tRNA(Sec). This Arthrobacter sp. (strain FB24) protein is Serine--tRNA ligase.